The primary structure comprises 148 residues: Ribose-5-P isomerase B (148 aa).

Asp-8–Glu-9 is a D-ribulose 5-phosphate binding site. Cys-65 acts as the Proton acceptor in catalysis. Residues Gly-66–Gly-70, Asn-99, Arg-132, and Lys-136 each bind D-ribulose 5-phosphate.

It belongs to the LacAB/RpiB family.

The enzyme catalyses aldehydo-D-ribose 5-phosphate = D-ribulose 5-phosphate. It participates in carbohydrate degradation; pentose phosphate pathway; D-ribose 5-phosphate from D-ribulose 5-phosphate (non-oxidative stage): step 1/1. Functionally, catalyzes the interconversion of ribulose-5-P and ribose-5-P. The polypeptide is Ribose-5-P isomerase B (Listeria innocua serovar 6a (strain ATCC BAA-680 / CLIP 11262)).